The sequence spans 200 residues: 3-isopropylmalate dehydratase small subunit (200 aa).

The protein belongs to the LeuD family. LeuD type 1 subfamily. In terms of assembly, heterodimer of LeuC and LeuD.

It carries out the reaction (2R,3S)-3-isopropylmalate = (2S)-2-isopropylmalate. Its pathway is amino-acid biosynthesis; L-leucine biosynthesis; L-leucine from 3-methyl-2-oxobutanoate: step 2/4. Catalyzes the isomerization between 2-isopropylmalate and 3-isopropylmalate, via the formation of 2-isopropylmaleate. This is 3-isopropylmalate dehydratase small subunit from Vibrio atlanticus (strain LGP32) (Vibrio splendidus (strain Mel32)).